Reading from the N-terminus, the 359-residue chain is Phosphoserine aminotransferase (359 aa).

L-glutamate is bound at residue Arg42. Residues 76–77 (AS), Trp102, Thr152, Asp171, and Gln194 contribute to the pyridoxal 5'-phosphate site. An N6-(pyridoxal phosphate)lysine modification is found at Lys195. 236–237 (NT) lines the pyridoxal 5'-phosphate pocket.

It belongs to the class-V pyridoxal-phosphate-dependent aminotransferase family. SerC subfamily. In terms of assembly, homodimer. Pyridoxal 5'-phosphate serves as cofactor.

It is found in the cytoplasm. The enzyme catalyses O-phospho-L-serine + 2-oxoglutarate = 3-phosphooxypyruvate + L-glutamate. It carries out the reaction 4-(phosphooxy)-L-threonine + 2-oxoglutarate = (R)-3-hydroxy-2-oxo-4-phosphooxybutanoate + L-glutamate. The protein operates within amino-acid biosynthesis; L-serine biosynthesis; L-serine from 3-phospho-D-glycerate: step 2/3. Its pathway is cofactor biosynthesis; pyridoxine 5'-phosphate biosynthesis; pyridoxine 5'-phosphate from D-erythrose 4-phosphate: step 3/5. Its function is as follows. Catalyzes the reversible conversion of 3-phosphohydroxypyruvate to phosphoserine and of 3-hydroxy-2-oxo-4-phosphonooxybutanoate to phosphohydroxythreonine. The protein is Phosphoserine aminotransferase of Vesicomyosocius okutanii subsp. Calyptogena okutanii (strain HA).